The following is a 147-amino-acid chain: MERTYLMIKPDGVQRNLIGEIVSRFEKKGFTLIGAKLMTVTKEQAETHYAEHKERPFFGELVDFITSGPVFAMVWEGENVIATARKMMGATNPADAEPGTIRGDFGVQVAMNVIHGSDSPESAKREIDIFFDSSELNEYDKVVNRWV.

The ATP site is built by lysine 9, phenylalanine 57, arginine 85, threonine 91, arginine 102, and asparagine 112. Phosphothreonine is present on threonine 91. The Pros-phosphohistidine intermediate role is filled by histidine 115. The residue at position 122 (serine 122) is a Phosphoserine.

It belongs to the NDK family. As to quaternary structure, homotetramer. Mg(2+) serves as cofactor.

The protein resides in the cytoplasm. It catalyses the reaction a 2'-deoxyribonucleoside 5'-diphosphate + ATP = a 2'-deoxyribonucleoside 5'-triphosphate + ADP. It carries out the reaction a ribonucleoside 5'-diphosphate + ATP = a ribonucleoside 5'-triphosphate + ADP. Its function is as follows. Major role in the synthesis of nucleoside triphosphates other than ATP. The ATP gamma phosphate is transferred to the NDP beta phosphate via a ping-pong mechanism, using a phosphorylated active-site intermediate. This is Nucleoside diphosphate kinase from Halalkalibacterium halodurans (strain ATCC BAA-125 / DSM 18197 / FERM 7344 / JCM 9153 / C-125) (Bacillus halodurans).